Reading from the N-terminus, the 382-residue chain is ATP phosphoribosyltransferase regulatory subunit (382 aa).

This sequence belongs to the class-II aminoacyl-tRNA synthetase family. HisZ subfamily. In terms of assembly, heteromultimer composed of HisG and HisZ subunits.

It localises to the cytoplasm. The protein operates within amino-acid biosynthesis; L-histidine biosynthesis; L-histidine from 5-phospho-alpha-D-ribose 1-diphosphate: step 1/9. Functionally, required for the first step of histidine biosynthesis. May allow the feedback regulation of ATP phosphoribosyltransferase activity by histidine. This Burkholderia pseudomallei (strain K96243) protein is ATP phosphoribosyltransferase regulatory subunit.